Reading from the N-terminus, the 528-residue chain is Na(+)/H(+) antiporter NhaB (528 aa).

Helical transmembrane passes span 23–45 (FAIL…VAGW), 66–86 (PGGL…SQVL), 95–115 (VLLL…LLLF), 139–159 (AFLS…AVAV), 203–223 (LLMH…VGEP), 241–261 (LRMS…CFLV), 310–330 (LIIG…SVII), 349–369 (EEAL…GVII), 390–410 (LVIF…VFVG), 448–468 (ATPN…APLI), and 476–496 (VWMA…AIQF).

The protein belongs to the NhaB Na(+)/H(+) (TC 2.A.34) antiporter family.

The protein resides in the cell inner membrane. The catalysed reaction is 2 Na(+)(in) + 3 H(+)(out) = 2 Na(+)(out) + 3 H(+)(in). Functionally, na(+)/H(+) antiporter that extrudes sodium in exchange for external protons. This is Na(+)/H(+) antiporter NhaB from Shewanella piezotolerans (strain WP3 / JCM 13877).